The sequence spans 252 residues: 2-succinyl-6-hydroxy-2,4-cyclohexadiene-1-carboxylate synthase (252 aa).

This sequence belongs to the AB hydrolase superfamily. MenH family. As to quaternary structure, monomer.

It catalyses the reaction 5-enolpyruvoyl-6-hydroxy-2-succinyl-cyclohex-3-ene-1-carboxylate = (1R,6R)-6-hydroxy-2-succinyl-cyclohexa-2,4-diene-1-carboxylate + pyruvate. The protein operates within quinol/quinone metabolism; 1,4-dihydroxy-2-naphthoate biosynthesis; 1,4-dihydroxy-2-naphthoate from chorismate: step 3/7. Its pathway is quinol/quinone metabolism; menaquinone biosynthesis. Catalyzes a proton abstraction reaction that results in 2,5-elimination of pyruvate from 2-succinyl-5-enolpyruvyl-6-hydroxy-3-cyclohexene-1-carboxylate (SEPHCHC) and the formation of 2-succinyl-6-hydroxy-2,4-cyclohexadiene-1-carboxylate (SHCHC). This chain is 2-succinyl-6-hydroxy-2,4-cyclohexadiene-1-carboxylate synthase, found in Escherichia coli O81 (strain ED1a).